We begin with the raw amino-acid sequence, 130 residues long: Small ribosomal subunit protein uS8 (130 aa).

This sequence belongs to the universal ribosomal protein uS8 family. As to quaternary structure, part of the 30S ribosomal subunit. Contacts proteins S5 and S12.

Its function is as follows. One of the primary rRNA binding proteins, it binds directly to 16S rRNA central domain where it helps coordinate assembly of the platform of the 30S subunit. In Pseudoalteromonas translucida (strain TAC 125), this protein is Small ribosomal subunit protein uS8.